Here is a 55-residue protein sequence, read N- to C-terminus: uncharacterized protein (55 aa).

It localises to the plastid. This is an uncharacterized protein from Cuscuta reflexa (Southern Asian dodder).